The following is a 219-amino-acid chain: Ribonuclease T (219 aa).

In terms of domain architecture, Exonuclease spans 20-194 (VVIDIETAGF…YDSLQTANLF (175 aa)). Positions 23, 25, 181, and 186 each coordinate Mg(2+). The Proton donor/acceptor role is filled by His181.

This sequence belongs to the RNase T family. As to quaternary structure, homodimer. Requires Mg(2+) as cofactor.

Its function is as follows. Trims short 3' overhangs of a variety of RNA species, leaving a one or two nucleotide 3' overhang. Responsible for the end-turnover of tRNA: specifically removes the terminal AMP residue from uncharged tRNA (tRNA-C-C-A). Also appears to be involved in tRNA biosynthesis. The sequence is that of Ribonuclease T from Buchnera aphidicola subsp. Schizaphis graminum (strain Sg).